The chain runs to 207 residues: Ribosomal RNA small subunit methyltransferase G (207 aa).

S-adenosyl-L-methionine is bound by residues G73, L78, 124 to 125 (VE), and R139.

This sequence belongs to the methyltransferase superfamily. RNA methyltransferase RsmG family.

The protein localises to the cytoplasm. The catalysed reaction is guanosine(527) in 16S rRNA + S-adenosyl-L-methionine = N(7)-methylguanosine(527) in 16S rRNA + S-adenosyl-L-homocysteine. Its function is as follows. Specifically methylates the N7 position of guanine in position 527 of 16S rRNA. The protein is Ribosomal RNA small subunit methyltransferase G of Salmonella choleraesuis (strain SC-B67).